The chain runs to 84 residues: Translation initiation factor IF-1, chloroplastic (84 aa).

In terms of domain architecture, S1-like spans 1-72 (MKKQNLVEME…SKGRITYRLR (72 aa)).

This sequence belongs to the IF-1 family. As to quaternary structure, component of the 30S ribosomal translation pre-initiation complex which assembles on the 30S ribosome in the order IF-2 and IF-3, IF-1 and N-formylmethionyl-tRNA(fMet); mRNA recruitment can occur at any time during PIC assembly.

The protein resides in the plastid. It is found in the chloroplast. Its function is as follows. One of the essential components for the initiation of protein synthesis. Stabilizes the binding of IF-2 and IF-3 on the 30S subunit to which N-formylmethionyl-tRNA(fMet) subsequently binds. Helps modulate mRNA selection, yielding the 30S pre-initiation complex (PIC). Upon addition of the 50S ribosomal subunit IF-1, IF-2 and IF-3 are released leaving the mature 70S translation initiation complex. This is Translation initiation factor IF-1, chloroplastic from Spirogyra maxima (Green alga).